Here is a 358-residue protein sequence, read N- to C-terminus: UDP-3-O-acylglucosamine N-acyltransferase (358 aa).

Residue H248 is the Proton acceptor of the active site.

The protein belongs to the transferase hexapeptide repeat family. LpxD subfamily. Homotrimer.

The enzyme catalyses a UDP-3-O-[(3R)-3-hydroxyacyl]-alpha-D-glucosamine + a (3R)-hydroxyacyl-[ACP] = a UDP-2-N,3-O-bis[(3R)-3-hydroxyacyl]-alpha-D-glucosamine + holo-[ACP] + H(+). Its pathway is bacterial outer membrane biogenesis; LPS lipid A biosynthesis. Functionally, catalyzes the N-acylation of UDP-3-O-acylglucosamine using 3-hydroxyacyl-ACP as the acyl donor. Is involved in the biosynthesis of lipid A, a phosphorylated glycolipid that anchors the lipopolysaccharide to the outer membrane of the cell. In Synechococcus sp. (strain WH7803), this protein is UDP-3-O-acylglucosamine N-acyltransferase.